Consider the following 414-residue polypeptide: N-carbamoyl-L-amino-acid amidohydrolase (414 aa).

A divalent metal cation is bound by residues histidine 83, aspartate 94, glutamate 129, and histidine 195. An N-carbamoyl-L-alpha-amino acid is bound by residues glutamine 198, histidine 231, asparagine 281, arginine 294, and glycine 363. Residues 214–333 (GIAGPSWFKV…QIEKNMAAVP (120 aa)) form an involved in dimerization region. An a divalent metal cation-binding site is contributed by histidine 388.

Belongs to the peptidase M20 family. Homodimer. Mn(2+) serves as cofactor. Requires Ni(2+) as cofactor. It depends on Co(2+) as a cofactor. The cofactor is Fe(2+).

It carries out the reaction an N-carbamoyl-L-alpha-amino acid + H2O + 2 H(+) = an L-alpha-amino acid + NH4(+) + CO2. The catalysed reaction is N-carbamoyl-L-methionine + H2O + 2 H(+) = L-methionine + NH4(+) + CO2. Functionally, catalyzes the hydrolysis of N-carbamoyl-L-alpha-amino acids to free L-alpha-amino acids. Is strictly L-specific since it is inactive toward N-carbamoyl-D-alpha-amino acids. This is N-carbamoyl-L-amino-acid amidohydrolase from Pseudomonas sp. (strain NS671).